We begin with the raw amino-acid sequence, 442 residues long: tRNA modification GTPase MnmE (442 aa).

Residues Arg-21, Glu-79, and Lys-118 each contribute to the (6S)-5-formyl-5,6,7,8-tetrahydrofolate site. The TrmE-type G domain occupies 214–367 (GFKIAIVGKP…LKEELQNYLN (154 aa)). Asn-224 contributes to the K(+) binding site. Residues 224–229 (NVGKSS), 243–249 (SDIAGTT), and 268–271 (DTAG) contribute to the GTP site. Ser-228 is a binding site for Mg(2+). Positions 243, 245, and 248 each coordinate K(+). Residue Thr-249 coordinates Mg(2+). Residue Lys-442 participates in (6S)-5-formyl-5,6,7,8-tetrahydrofolate binding.

Belongs to the TRAFAC class TrmE-Era-EngA-EngB-Septin-like GTPase superfamily. TrmE GTPase family. In terms of assembly, homodimer. Heterotetramer of two MnmE and two MnmG subunits. K(+) serves as cofactor.

It is found in the cytoplasm. Exhibits a very high intrinsic GTPase hydrolysis rate. Involved in the addition of a carboxymethylaminomethyl (cmnm) group at the wobble position (U34) of certain tRNAs, forming tRNA-cmnm(5)s(2)U34. The polypeptide is tRNA modification GTPase MnmE (Campylobacter jejuni (strain RM1221)).